Here is a 1027-residue protein sequence, read N- to C-terminus: Exportin-T (1027 aa).

This sequence belongs to the exportin family.

Its subcellular location is the nucleus. It localises to the cytoplasm. Functionally, tRNA nucleus export receptor which facilitates tRNA translocation across the nuclear pore complex. Involved in pre-tRNA splicing, probably by affecting the interaction of pre-tRNA with splicing endonuclease. The polypeptide is Exportin-T (LOS1) (Pyricularia oryzae (strain 70-15 / ATCC MYA-4617 / FGSC 8958) (Rice blast fungus)).